Reading from the N-terminus, the 227-residue chain is Thiamine-phosphate synthase (227 aa).

Residues 50–54 and D82 each bind 4-amino-2-methyl-5-(diphosphooxymethyl)pyrimidine; that span reads QFRQK. Mg(2+) is bound by residues D83 and D102. Residue T121 coordinates 4-amino-2-methyl-5-(diphosphooxymethyl)pyrimidine. 147 to 149 lines the 2-[(2R,5Z)-2-carboxy-4-methylthiazol-5(2H)-ylidene]ethyl phosphate pocket; sequence TTS. A 4-amino-2-methyl-5-(diphosphooxymethyl)pyrimidine-binding site is contributed by K150. Residues G178 and 198–199 contribute to the 2-[(2R,5Z)-2-carboxy-4-methylthiazol-5(2H)-ylidene]ethyl phosphate site; that span reads LS.

Belongs to the thiamine-phosphate synthase family. It depends on Mg(2+) as a cofactor.

It carries out the reaction 2-[(2R,5Z)-2-carboxy-4-methylthiazol-5(2H)-ylidene]ethyl phosphate + 4-amino-2-methyl-5-(diphosphooxymethyl)pyrimidine + 2 H(+) = thiamine phosphate + CO2 + diphosphate. The enzyme catalyses 2-(2-carboxy-4-methylthiazol-5-yl)ethyl phosphate + 4-amino-2-methyl-5-(diphosphooxymethyl)pyrimidine + 2 H(+) = thiamine phosphate + CO2 + diphosphate. It catalyses the reaction 4-methyl-5-(2-phosphooxyethyl)-thiazole + 4-amino-2-methyl-5-(diphosphooxymethyl)pyrimidine + H(+) = thiamine phosphate + diphosphate. Its pathway is cofactor biosynthesis; thiamine diphosphate biosynthesis; thiamine phosphate from 4-amino-2-methyl-5-diphosphomethylpyrimidine and 4-methyl-5-(2-phosphoethyl)-thiazole: step 1/1. Functionally, condenses 4-methyl-5-(beta-hydroxyethyl)thiazole monophosphate (THZ-P) and 2-methyl-4-amino-5-hydroxymethyl pyrimidine pyrophosphate (HMP-PP) to form thiamine monophosphate (TMP). This Salinibacter ruber (strain DSM 13855 / M31) protein is Thiamine-phosphate synthase.